Consider the following 379-residue polypeptide: Alkanesulfonate monooxygenase (379 aa).

It belongs to the SsuD family.

It catalyses the reaction an alkanesulfonate + FMNH2 + O2 = an aldehyde + FMN + sulfite + H2O + 2 H(+). Catalyzes the desulfonation of aliphatic sulfonates. This Pseudomonas savastanoi pv. phaseolicola (strain 1448A / Race 6) (Pseudomonas syringae pv. phaseolicola (strain 1448A / Race 6)) protein is Alkanesulfonate monooxygenase.